The sequence spans 107 residues: Metallothionein-1 (107 aa).

This sequence belongs to the metallothionein superfamily. Type 7 family.

Functionally, the metallothioneins are involved in the cellular sequestration of toxic metal ions. Binds 12 cadmium ions per molecule. The polypeptide is Metallothionein-1 (Tetrahymena thermophila).